The primary structure comprises 507 residues: Cysteine--tRNA ligase (507 aa).

Cysteine 29 serves as a coordination point for Zn(2+). The short motif at proline 31 to asparagine 41 is the 'HIGH' region element. Zn(2+) contacts are provided by cysteine 207, histidine 232, and glutamate 236. A 'KMSKS' region motif is present at residues lysine 265 to serine 269. Lysine 268 is a binding site for ATP.

It belongs to the class-I aminoacyl-tRNA synthetase family. Monomer. Zn(2+) is required as a cofactor.

It is found in the cytoplasm. It catalyses the reaction tRNA(Cys) + L-cysteine + ATP = L-cysteinyl-tRNA(Cys) + AMP + diphosphate. The chain is Cysteine--tRNA ligase from Neorickettsia sennetsu (strain ATCC VR-367 / Miyayama) (Ehrlichia sennetsu).